The primary structure comprises 476 residues: MHLLINIIFLINIIFIISIIFIERRNPQTTWAWILILTFLPILGFIIYILFGQNITREKNFKRKILDDKTKQKYLNSFKSHYKLDNISLKYKDLIMMNFNNDNSTYTQRNDIDLYFDANSLFQEMIYEINKAEKFIHMEFYIFKSDEIGKKILQALTKKAKEGVEVKLLVDSIGNSIHKKDIDKLKAAGGDFKIFFPGFCKYINLRINYRNHRKILIIDSKVAFLGGFNIGDEYLGKDKNIGNWRDTHTKIKGLAINDLEARFLLDWSYANESDLDIDLKKYFINPHSTNLPNNIIGAQIVSSGPDHTEQQIKNGYFKIINSAKKNLFIQTPYFVPDEPMLEALRLAALSGVDVKIMLPGNPDHKFMEWIANSYFESLLNAGVKIYLYEKGFLHAKTIVADSSICSVGTANMDIRSFSLNFESNIFIYNEAISKSMEEQFFKDLKVCTKVTLESFEKRSIISRIGESIIRLVSPLM.

2 helical membrane-spanning segments follow: residues 2 to 22 and 31 to 51; these read HLLI…IIFI and WAWI…YILF. 2 consecutive PLD phosphodiesterase domains span residues 207 to 234 and 389 to 416; these read INYR…GDEY and EKGF…DIRS. Active-site residues include His-212, Lys-214, Asp-219, His-394, Lys-396, and Asp-401.

This sequence belongs to the phospholipase D family. Cardiolipin synthase subfamily.

It is found in the cell membrane. It carries out the reaction 2 a 1,2-diacyl-sn-glycero-3-phospho-(1'-sn-glycerol) = a cardiolipin + glycerol. Its function is as follows. Catalyzes the reversible phosphatidyl group transfer from one phosphatidylglycerol molecule to another to form cardiolipin (CL) (diphosphatidylglycerol) and glycerol. The chain is Cardiolipin synthase (cls) from Clostridium perfringens (strain SM101 / Type A).